Here is a 606-residue protein sequence, read N- to C-terminus: NADH-ubiquinone oxidoreductase chain 5 (606 aa).

An N-formylmethionine modification is found at Met1. Transmembrane regions (helical) follow at residues 4–24 (FSSL…MMSF), 43–63 (AFIT…ELII), 87–107 (MMFI…SMWY), 117–137 (FFKY…ANNL), 140–160 (LFIG…WWYG), 171–191 (AILY…WFLT), 213–233 (LIGL…HPWL), 241–261 (TPVS…FLLI), 273–293 (IQSI…MCAL), 310–330 (LGLM…LHIC), 366–386 (MPFT…MPFL), 413–433 (LIAT…ALLG), 457–477 (LLIG…PTTI), 482–502 (MPYY…ILAL), and 582–602 (GLIK…MILF).

In terms of assembly, core subunit of respiratory chain NADH dehydrogenase (Complex I) which is composed of 45 different subunits.

Its subcellular location is the mitochondrion inner membrane. It catalyses the reaction a ubiquinone + NADH + 5 H(+)(in) = a ubiquinol + NAD(+) + 4 H(+)(out). Core subunit of the mitochondrial membrane respiratory chain NADH dehydrogenase (Complex I) which catalyzes electron transfer from NADH through the respiratory chain, using ubiquinone as an electron acceptor. Essential for the catalytic activity and assembly of complex I. This Bos taurus (Bovine) protein is NADH-ubiquinone oxidoreductase chain 5 (MT-ND5).